A 282-amino-acid chain; its full sequence is HTH-type transcriptional activator RhaR (282 aa).

Residues 179-277 (DKLITRLAAS…GMTPSQWRHL (99 aa)) enclose the HTH araC/xylS-type domain. DNA-binding regions (H-T-H motif) lie at residues 196 to 217 (DKFCDEASCSERVLRQQFRQQT) and 244 to 267 (ISDISTECGFEDSNYFSVVFTRET).

Binds DNA as a dimer.

It is found in the cytoplasm. Functionally, activates expression of the rhaSR operon in response to L-rhamnose. The chain is HTH-type transcriptional activator RhaR from Escherichia coli (strain K12 / MC4100 / BW2952).